A 685-amino-acid chain; its full sequence is Polyphosphate kinase (685 aa).

Residue N45 participates in ATP binding. The Mg(2+) site is built by R375 and R405. The active-site Phosphohistidine intermediate is H435. Positions 468, 564, and 592 each coordinate ATP.

The protein belongs to the polyphosphate kinase 1 (PPK1) family. Mg(2+) serves as cofactor. In terms of processing, an intermediate of this reaction is the autophosphorylated ppk in which a phosphate is covalently linked to a histidine residue through a N-P bond.

The enzyme catalyses [phosphate](n) + ATP = [phosphate](n+1) + ADP. Catalyzes the reversible transfer of the terminal phosphate of ATP to form a long-chain polyphosphate (polyP). This chain is Polyphosphate kinase, found in Neisseria meningitidis serogroup B (strain ATCC BAA-335 / MC58).